We begin with the raw amino-acid sequence, 467 residues long: UDP-N-acetylmuramate--L-alanine ligase (467 aa).

Gly112–Thr118 lines the ATP pocket.

It belongs to the MurCDEF family.

It is found in the cytoplasm. It carries out the reaction UDP-N-acetyl-alpha-D-muramate + L-alanine + ATP = UDP-N-acetyl-alpha-D-muramoyl-L-alanine + ADP + phosphate + H(+). It participates in cell wall biogenesis; peptidoglycan biosynthesis. Cell wall formation. The protein is UDP-N-acetylmuramate--L-alanine ligase of Paraburkholderia xenovorans (strain LB400).